The chain runs to 91 residues: uncharacterized protein (91 aa).

The interval 71–91 (EANDRPSKKCGSGNLRVEKLV) is disordered.

This is an uncharacterized protein from Archaeoglobus fulgidus (strain ATCC 49558 / DSM 4304 / JCM 9628 / NBRC 100126 / VC-16).